A 159-amino-acid polypeptide reads, in one-letter code: Protein NrdI (159 aa).

Belongs to the NrdI family.

Functionally, probably involved in ribonucleotide reductase function. The polypeptide is Protein NrdI (Rhodococcus erythropolis (strain PR4 / NBRC 100887)).